The sequence spans 513 residues: GMP synthase [glutamine-hydrolyzing] (513 aa).

In terms of domain architecture, Glutamine amidotransferase type-1 spans 3 to 200 (SVLVLDFGSQ…LIDIAGITPD (198 aa)). Cys80 functions as the Nucleophile in the catalytic mechanism. Residues His174 and Glu176 contribute to the active site. The region spanning 201–388 (WSPKHFIDHQ…LGIAEDILMR (188 aa)) is the GMPS ATP-PPase domain. 228-234 (SGGVDSS) is an ATP binding site.

Homodimer.

It catalyses the reaction XMP + L-glutamine + ATP + H2O = GMP + L-glutamate + AMP + diphosphate + 2 H(+). It participates in purine metabolism; GMP biosynthesis; GMP from XMP (L-Gln route): step 1/1. Catalyzes the synthesis of GMP from XMP. In Chlorobium limicola (strain DSM 245 / NBRC 103803 / 6330), this protein is GMP synthase [glutamine-hydrolyzing].